The primary structure comprises 149 residues: UPF0260 protein PSEEN4031 (149 aa).

It belongs to the UPF0260 family.

The sequence is that of UPF0260 protein PSEEN4031 from Pseudomonas entomophila (strain L48).